The primary structure comprises 138 residues: Putative pre-16S rRNA nuclease (138 aa).

It belongs to the YqgF nuclease family.

The protein resides in the cytoplasm. Functionally, could be a nuclease involved in processing of the 5'-end of pre-16S rRNA. The polypeptide is Putative pre-16S rRNA nuclease (Listeria innocua serovar 6a (strain ATCC BAA-680 / CLIP 11262)).